The following is a 332-amino-acid chain: Acetyl-coenzyme A carboxylase carboxyl transferase subunit beta (332 aa).

Residues 24–293 (LWIKCPDSGH…PEVIVESEPE (270 aa)) form the CoA carboxyltransferase N-terminal domain. The interval 288–332 (VESEPEPEPEPVVAEIIPPTSDLPVSAPAPAPVAAQTPAPAAPSA) is disordered. Residues 298 to 332 (PVVAEIIPPTSDLPVSAPAPAPVAAQTPAPAAPSA) show a composition bias toward low complexity.

The protein belongs to the AccD/PCCB family. Acetyl-CoA carboxylase is a heterohexamer composed of biotin carboxyl carrier protein (AccB), biotin carboxylase (AccC) and two subunits each of ACCase subunit alpha (AccA) and ACCase subunit beta (AccD).

The protein resides in the cytoplasm. It carries out the reaction N(6)-carboxybiotinyl-L-lysyl-[protein] + acetyl-CoA = N(6)-biotinyl-L-lysyl-[protein] + malonyl-CoA. Its pathway is lipid metabolism; malonyl-CoA biosynthesis; malonyl-CoA from acetyl-CoA: step 1/1. Its function is as follows. Component of the acetyl coenzyme A carboxylase (ACC) complex. Biotin carboxylase (BC) catalyzes the carboxylation of biotin on its carrier protein (BCCP) and then the CO(2) group is transferred by the transcarboxylase to acetyl-CoA to form malonyl-CoA. The protein is Acetyl-coenzyme A carboxylase carboxyl transferase subunit beta of Rhodopseudomonas palustris (strain BisB18).